A 228-amino-acid polypeptide reads, in one-letter code: uncharacterized protein (228 aa).

A signal peptide spans Met1–Gly15. Cys16 carries N-palmitoyl cysteine lipidation. Cys16 carries S-diacylglycerol cysteine lipidation.

This sequence to P.multocida PM0015.

The protein resides in the cell membrane. This is an uncharacterized protein from Pasteurella multocida (strain Pm70).